The chain runs to 190 residues: Vespryn-21 (190 aa).

The signal sequence occupies residues 1–20 (MLLFTLCFFADLENGGKALA). The 107-residue stretch at 21–127 (SPPGKWQKAD…LIWQRGLWFL (107 aa)) folds into the B30.2/SPRY domain. Residues 128–190 (QRLETDSDKL…LGGGVSLTNL (63 aa)) constitute a propeptide that is removed on maturation.

The protein belongs to the ohanin/vespryn family. As to expression, expressed by the venom gland.

The protein resides in the secreted. Neurotoxin that produces dose-dependent hypolocomotion and hyperalgesia in mice. May directly act on the central nervous system, as it is 6500-fold more potent when administered intracerebroventricularly than intraperitoneal. The protein is Vespryn-21 of Drysdalia coronoides (White-lipped snake).